The primary structure comprises 218 residues: Oxygen regulatory protein NreC (218 aa).

Residues 2–119 (KIVIADDHAV…QLILAVRTVY (118 aa)) enclose the Response regulatory domain. A 4-aspartylphosphate modification is found at D53. Residues 149 to 214 (SSDPFKILSK…ELVEYALKKK (66 aa)) form the HTH luxR-type domain. Positions 173 to 192 (NKDIAEKLFVSVKTVEAHKT) form a DNA-binding region, H-T-H motif.

In terms of processing, phosphorylated by NreB.

It localises to the cytoplasm. Member of the two-component regulatory system NreB/NreC involved in the control of dissimilatory nitrate/nitrite reduction in response to oxygen. Phosphorylated NreC binds to a GC-rich palindromic sequence at the promoters of the nitrate (narGHJI) and nitrite (nir) reductase operons, as well as the putative nitrate transporter gene narT, and activates their expression. This chain is Oxygen regulatory protein NreC (nreC), found in Staphylococcus epidermidis (strain ATCC 35984 / DSM 28319 / BCRC 17069 / CCUG 31568 / BM 3577 / RP62A).